We begin with the raw amino-acid sequence, 919 residues long: Eukaryotic translation initiation factor 3 subunit C (919 aa).

The segment at 1–28 (MSRFFANGSDSESESSEEEVQAPNFNKA) is disordered. Residues 11–20 (SESESSEEEV) show a composition bias toward acidic residues. Residues S34, S165, and S177 each carry the phosphoserine modification. The segment at 154 to 275 (LSRFRENPQE…EQKIKLRKRA (122 aa)) is disordered. The span at 162 to 171 (QEESENEDEE) shows a compositional bias: acidic residues. Positions 210–236 (ADDEDSDESIDWDPDTESETESSEDEN) are enriched in acidic residues. Positions 241–269 (MRERFLKRSTEKDDKDDDKRKDKRKEQKI) are enriched in basic and acidic residues. Positions 640-816 (FHMHINLELL…ETVVMHRSEP (177 aa)) constitute a PCI domain. The tract at residues 848–919 (FFQRGNMGNR…QQQVQTIDEE (72 aa)) is disordered. Residues 883–894 (QRNRNQRGHHKN) are compositionally biased toward basic residues. The span at 895–919 (QQNQNQQQQQQHQREQQQVQTIDEE) shows a compositional bias: low complexity.

It belongs to the eIF-3 subunit C family. In terms of assembly, component of the eukaryotic translation initiation factor 3 (eIF-3) complex. The eIF-3 complex interacts with pix.

It is found in the cytoplasm. Component of the eukaryotic translation initiation factor 3 (eIF-3) complex, which is involved in protein synthesis of a specialized repertoire of mRNAs and, together with other initiation factors, stimulates binding of mRNA and methionyl-tRNAi to the 40S ribosome. The eIF-3 complex specifically targets and initiates translation of a subset of mRNAs involved in cell proliferation. This is Eukaryotic translation initiation factor 3 subunit C from Drosophila willistoni (Fruit fly).